We begin with the raw amino-acid sequence, 139 residues long: Hydrogenase maturation factor HypA (139 aa).

Ni(2+) is bound by residues Met-1 and His-2. Residues Cys-73 and Cys-76 each contribute to the Zn(2+) site. Ni(2+) is bound at residue His-98. 2 residues coordinate Zn(2+): Cys-110 and Cys-113.

This sequence belongs to the HypA/HybF family. Monomer and homodimer. Could also form hexamers. Forms a complex with HypB.

Its function is as follows. Involved in the maturation of [NiFe] hydrogenases. Required for nickel insertion into the metal center of the hydrogenase. The protein is Hydrogenase maturation factor HypA of Thermococcus kodakarensis (strain ATCC BAA-918 / JCM 12380 / KOD1) (Pyrococcus kodakaraensis (strain KOD1)).